The chain runs to 296 residues: Bifunctional protein FolD (296 aa).

Residues 166–168 (GRS), serine 195, and threonine 236 contribute to the NADP(+) site.

This sequence belongs to the tetrahydrofolate dehydrogenase/cyclohydrolase family. Homodimer.

The enzyme catalyses (6R)-5,10-methylene-5,6,7,8-tetrahydrofolate + NADP(+) = (6R)-5,10-methenyltetrahydrofolate + NADPH. It catalyses the reaction (6R)-5,10-methenyltetrahydrofolate + H2O = (6R)-10-formyltetrahydrofolate + H(+). Its pathway is one-carbon metabolism; tetrahydrofolate interconversion. In terms of biological role, catalyzes the oxidation of 5,10-methylenetetrahydrofolate to 5,10-methenyltetrahydrofolate and then the hydrolysis of 5,10-methenyltetrahydrofolate to 10-formyltetrahydrofolate. This chain is Bifunctional protein FolD, found in Dehalococcoides mccartyi (strain ATCC BAA-2266 / KCTC 15142 / 195) (Dehalococcoides ethenogenes (strain 195)).